Here is a 146-residue protein sequence, read N- to C-terminus: MKLHELKPAAGSKKAPKRIGRGTGSGLGRNAGKGEKGQNARSGGGVRPGFEGGQMPLYRRLPKRGFTNIFAKKIVSINLDRLNIFENGTEVTPELLLERRVVSKVLDGVKILGNGTLEKSLTVKGCKFSKSAIEKIEAAGGKVEVM.

The tract at residues 1–54 is disordered; sequence MKLHELKPAAGSKKAPKRIGRGTGSGLGRNAGKGEKGQNARSGGGVRPGFEGGQ. Composition is skewed to gly residues over residues 21 to 31 and 42 to 52; these read RGTGSGLGRNA and SGGGVRPGFEG.

Belongs to the universal ribosomal protein uL15 family. In terms of assembly, part of the 50S ribosomal subunit.

Functionally, binds to the 23S rRNA. The sequence is that of Large ribosomal subunit protein uL15 from Clostridium beijerinckii (strain ATCC 51743 / NCIMB 8052) (Clostridium acetobutylicum).